Consider the following 403-residue polypeptide: S-adenosylmethionine synthase (403 aa).

His15 lines the ATP pocket. Asp17 is a binding site for Mg(2+). Residue Glu43 coordinates K(+). L-methionine contacts are provided by Glu56 and Gln99. The flexible loop stretch occupies residues 99 to 109 (QSPDINQGVDR). Residues 166–168 (DAK), 232–233 (KF), Asp241, 247–248 (RK), Ala264, and Lys268 each bind ATP. Residue Asp241 coordinates L-methionine. Lys272 contributes to the L-methionine binding site.

It belongs to the AdoMet synthase family. Homotetramer; dimer of dimers. The cofactor is Mg(2+). Requires K(+) as cofactor.

The protein localises to the cytoplasm. It catalyses the reaction L-methionine + ATP + H2O = S-adenosyl-L-methionine + phosphate + diphosphate. It functions in the pathway amino-acid biosynthesis; S-adenosyl-L-methionine biosynthesis; S-adenosyl-L-methionine from L-methionine: step 1/1. In terms of biological role, catalyzes the formation of S-adenosylmethionine (AdoMet) from methionine and ATP. The overall synthetic reaction is composed of two sequential steps, AdoMet formation and the subsequent tripolyphosphate hydrolysis which occurs prior to release of AdoMet from the enzyme. In Xanthomonas axonopodis pv. citri (strain 306), this protein is S-adenosylmethionine synthase.